The primary structure comprises 933 residues: Isoleucine--tRNA ligase (933 aa).

The 'HIGH' region signature appears at 57–67 (PYANGNIHVGH). Residue Glu-554 participates in L-isoleucyl-5'-AMP binding. Positions 595-599 (KMSKS) match the 'KMSKS' region motif. Lys-598 contributes to the ATP binding site.

It belongs to the class-I aminoacyl-tRNA synthetase family. IleS type 1 subfamily. As to quaternary structure, monomer.

The protein resides in the cytoplasm. It carries out the reaction tRNA(Ile) + L-isoleucine + ATP = L-isoleucyl-tRNA(Ile) + AMP + diphosphate. Functionally, catalyzes the attachment of isoleucine to tRNA(Ile). As IleRS can inadvertently accommodate and process structurally similar amino acids such as valine, to avoid such errors it has two additional distinct tRNA(Ile)-dependent editing activities. One activity is designated as 'pretransfer' editing and involves the hydrolysis of activated Val-AMP. The other activity is designated 'posttransfer' editing and involves deacylation of mischarged Val-tRNA(Ile). The polypeptide is Isoleucine--tRNA ligase (Streptococcus pyogenes serotype M3 (strain ATCC BAA-595 / MGAS315)).